Here is a 229-residue protein sequence, read N- to C-terminus: Large ribosomal subunit protein uL1 (229 aa).

Belongs to the universal ribosomal protein uL1 family. In terms of assembly, part of the 50S ribosomal subunit.

In terms of biological role, binds directly to 23S rRNA. The L1 stalk is quite mobile in the ribosome, and is involved in E site tRNA release. Functionally, protein L1 is also a translational repressor protein, it controls the translation of the L11 operon by binding to its mRNA. The chain is Large ribosomal subunit protein uL1 from Gemmatimonas aurantiaca (strain DSM 14586 / JCM 11422 / NBRC 100505 / T-27).